Reading from the N-terminus, the 205-residue chain is Urease accessory protein UreG (205 aa).

10–17 is a GTP binding site; it reads GPVGSGKT.

Belongs to the SIMIBI class G3E GTPase family. UreG subfamily. In terms of assembly, homodimer. UreD, UreF and UreG form a complex that acts as a GTP-hydrolysis-dependent molecular chaperone, activating the urease apoprotein by helping to assemble the nickel containing metallocenter of UreC. The UreE protein probably delivers the nickel.

The protein localises to the cytoplasm. Facilitates the functional incorporation of the urease nickel metallocenter. This process requires GTP hydrolysis, probably effectuated by UreG. The sequence is that of Urease accessory protein UreG from Corynebacterium urealyticum (strain ATCC 43042 / DSM 7109).